Consider the following 157-residue polypeptide: Ribosomal RNA large subunit methyltransferase H (157 aa).

Residues Leu73, Gly105, and Leu124–Phe129 each bind S-adenosyl-L-methionine.

It belongs to the RNA methyltransferase RlmH family. As to quaternary structure, homodimer.

The protein localises to the cytoplasm. It catalyses the reaction pseudouridine(1915) in 23S rRNA + S-adenosyl-L-methionine = N(3)-methylpseudouridine(1915) in 23S rRNA + S-adenosyl-L-homocysteine + H(+). Functionally, specifically methylates the pseudouridine at position 1915 (m3Psi1915) in 23S rRNA. The protein is Ribosomal RNA large subunit methyltransferase H of Porphyromonas gingivalis (strain ATCC 33277 / DSM 20709 / CIP 103683 / JCM 12257 / NCTC 11834 / 2561).